The primary structure comprises 95 residues: uncharacterized protein (95 aa).

Residues 1–21 (MKKITLFFTALLCLFSTSVLA) form the signal peptide.

This is an uncharacterized protein from Haemophilus influenzae (strain ATCC 51907 / DSM 11121 / KW20 / Rd).